Consider the following 497-residue polypeptide: Endoglucanase 17 (497 aa).

Residues 1-21 form the signal peptide; the sequence is MAAAGGAVLLLVLATATSVTG. The Nucleophile role is filled by D77. H406 is an active-site residue. An N-linked (GlcNAc...) asparagine glycan is attached at N451. Active-site residues include D458 and E467.

The protein belongs to the glycosyl hydrolase 9 (cellulase E) family.

It is found in the secreted. It carries out the reaction Endohydrolysis of (1-&gt;4)-beta-D-glucosidic linkages in cellulose, lichenin and cereal beta-D-glucans.. The chain is Endoglucanase 17 (GLU13) from Oryza sativa subsp. japonica (Rice).